The chain runs to 1388 residues: Dicer-like protein 2 (1388 aa).

The Helicase ATP-binding domain occupies 23-203 (MLEASMKENI…LLTVESNLDA (181 aa)). 36–43 (MDTGSGKT) is an ATP binding site. A DEAH box motif is present at residues 144–147 (DEAH). A Helicase C-terminal domain is found at 371–537 (SLLNFLDSLD…DDERQLQSVS (167 aa)). One can recognise a Dicer dsRNA-binding fold domain in the interval 564-658 (AMAHLHHFCA…LPLTKRPELK (95 aa)). RNase III domains lie at 919-1059 (ATRL…MDGG) and 1098-1281 (NERL…VDSG). Glu-1137, Asp-1267, and Glu-1270 together coordinate Mg(2+).

Belongs to the helicase family. Dicer subfamily. Mg(2+) serves as cofactor. Requires Mn(2+) as cofactor.

Dicer-like endonuclease involved in cleaving double-stranded RNA in the RNA interference (RNAi) pathway. Produces 21 to 25 bp dsRNAs (siRNAs) which target the selective destruction of homologous RNAs leading to sequence-specific suppression of gene expression, called post-transcriptional gene silencing (PTGS). Part of a broad host defense response against viral infection and transposons. In Neosartorya fischeri (strain ATCC 1020 / DSM 3700 / CBS 544.65 / FGSC A1164 / JCM 1740 / NRRL 181 / WB 181) (Aspergillus fischerianus), this protein is Dicer-like protein 2 (dcl2).